A 377-amino-acid chain; its full sequence is Phospho-N-acetylmuramoyl-pentapeptide-transferase (377 aa).

The next 10 membrane-spanning stretches (helical) occupy residues 27–47 (TAFA…YVIE), 71–91 (GTPT…TLLW), 94–114 (LSDP…AIGF), 139–159 (ILAS…GSYS), 182–202 (VPHL…IVIV), 216–236 (GLAI…TYVS), 252–272 (MVGE…GFLW), 280–300 (IFMG…VAVV), 305–325 (LLLP…ILQV), and 354–374 (KVIV…LTTL).

It belongs to the glycosyltransferase 4 family. MraY subfamily. Mg(2+) serves as cofactor.

It is found in the cell inner membrane. It carries out the reaction UDP-N-acetyl-alpha-D-muramoyl-L-alanyl-gamma-D-glutamyl-meso-2,6-diaminopimeloyl-D-alanyl-D-alanine + di-trans,octa-cis-undecaprenyl phosphate = di-trans,octa-cis-undecaprenyl diphospho-N-acetyl-alpha-D-muramoyl-L-alanyl-D-glutamyl-meso-2,6-diaminopimeloyl-D-alanyl-D-alanine + UMP. The protein operates within cell wall biogenesis; peptidoglycan biosynthesis. Functionally, catalyzes the initial step of the lipid cycle reactions in the biosynthesis of the cell wall peptidoglycan: transfers peptidoglycan precursor phospho-MurNAc-pentapeptide from UDP-MurNAc-pentapeptide onto the lipid carrier undecaprenyl phosphate, yielding undecaprenyl-pyrophosphoryl-MurNAc-pentapeptide, known as lipid I. This Acidobacterium capsulatum (strain ATCC 51196 / DSM 11244 / BCRC 80197 / JCM 7670 / NBRC 15755 / NCIMB 13165 / 161) protein is Phospho-N-acetylmuramoyl-pentapeptide-transferase.